A 276-amino-acid polypeptide reads, in one-letter code: Krueppel homolog 2 (276 aa).

A disordered region spans residues 1–37; that stretch reads MSAPTDQPPRSEGAQTNSSERSSQQQEQPQQSQSQNV. Low complexity predominate over residues 18-35; sequence SSERSSQQQEQPQQSQSQ. Position 22 is a phosphoserine (S22). 3 consecutive transmembrane segments (helical) span residues 53–73, 125–145, and 181–201; these read ALWA…LPIF, LIFF…LYSV, and ILKA…VLAF.

This sequence belongs to the PER33/POM33 family.

The protein localises to the membrane. Its function is as follows. Member of the dosage-dependent hierarchy effective upon white gene expression. The protein is Krueppel homolog 2 (Kr-h2) of Drosophila melanogaster (Fruit fly).